Reading from the N-terminus, the 113-residue chain is Small ribosomal subunit protein bS18 (113 aa).

Positions M1–R41 are disordered. Positions V16–A33 are enriched in basic and acidic residues.

Belongs to the bacterial ribosomal protein bS18 family. In terms of assembly, part of the 30S ribosomal subunit. Forms a tight heterodimer with protein bS6.

Binds as a heterodimer with protein bS6 to the central domain of the 16S rRNA, where it helps stabilize the platform of the 30S subunit. The protein is Small ribosomal subunit protein bS18 of Elusimicrobium minutum (strain Pei191).